The sequence spans 191 residues: UPF0669 protein C6orf120 homolog (191 aa).

The N-terminal stretch at 1–30 is a signal peptide; sequence MAAPRGRAAPWTTALLLLLTSQILSPGSCA. Asn53 is a glycosylation site (N-linked (GlcNAc...) asparagine).

Belongs to the UPF0669 family.

It is found in the secreted. In terms of biological role, may be involved in induction of apoptosis in CD4(+) T-cells, but not CD8(+) T-cells or hepatocytes. This Macaca fascicularis (Crab-eating macaque) protein is UPF0669 protein C6orf120 homolog.